Consider the following 290-residue polypeptide: Arylamine N-acetyltransferase, pineal gland isozyme NAT-10 (290 aa).

Residue Cys-68 is the Acyl-thioester intermediate of the active site. Active-site residues include His-107 and Asp-122.

Belongs to the arylamine N-acetyltransferase family.

It carries out the reaction an arylamine + acetyl-CoA = an N-acetylarylamine + CoA. This Gallus gallus (Chicken) protein is Arylamine N-acetyltransferase, pineal gland isozyme NAT-10.